A 212-amino-acid polypeptide reads, in one-letter code: Peptide methionine sulfoxide reductase MsrA (212 aa).

C52 is an active-site residue.

This sequence belongs to the MsrA Met sulfoxide reductase family.

It carries out the reaction L-methionyl-[protein] + [thioredoxin]-disulfide + H2O = L-methionyl-(S)-S-oxide-[protein] + [thioredoxin]-dithiol. The catalysed reaction is [thioredoxin]-disulfide + L-methionine + H2O = L-methionine (S)-S-oxide + [thioredoxin]-dithiol. Functionally, has an important function as a repair enzyme for proteins that have been inactivated by oxidation. Catalyzes the reversible oxidation-reduction of methionine sulfoxide in proteins to methionine. The polypeptide is Peptide methionine sulfoxide reductase MsrA (Salmonella paratyphi B (strain ATCC BAA-1250 / SPB7)).